A 426-amino-acid chain; its full sequence is Enolase (426 aa).

Position 163 (glutamine 163) interacts with (2R)-2-phosphoglycerate. Catalysis depends on glutamate 205, which acts as the Proton donor. The Mg(2+) site is built by aspartate 242, glutamate 286, and aspartate 313. The (2R)-2-phosphoglycerate site is built by lysine 338, arginine 367, serine 368, and lysine 389. Residue lysine 338 is the Proton acceptor of the active site.

The protein belongs to the enolase family. The cofactor is Mg(2+).

The protein localises to the cytoplasm. The protein resides in the secreted. Its subcellular location is the cell surface. The catalysed reaction is (2R)-2-phosphoglycerate = phosphoenolpyruvate + H2O. It participates in carbohydrate degradation; glycolysis; pyruvate from D-glyceraldehyde 3-phosphate: step 4/5. Functionally, catalyzes the reversible conversion of 2-phosphoglycerate (2-PG) into phosphoenolpyruvate (PEP). It is essential for the degradation of carbohydrates via glycolysis. This chain is Enolase, found in Helicobacter pylori (strain J99 / ATCC 700824) (Campylobacter pylori J99).